The sequence spans 535 residues: Bifunctional purine biosynthesis protein PurH (535 aa).

Positions 6 to 151 (TRLPVRRALI…KNHKDVAIVV (146 aa)) constitute an MGS-like domain.

Belongs to the PurH family.

The catalysed reaction is (6R)-10-formyltetrahydrofolate + 5-amino-1-(5-phospho-beta-D-ribosyl)imidazole-4-carboxamide = 5-formamido-1-(5-phospho-D-ribosyl)imidazole-4-carboxamide + (6S)-5,6,7,8-tetrahydrofolate. It catalyses the reaction IMP + H2O = 5-formamido-1-(5-phospho-D-ribosyl)imidazole-4-carboxamide. Its pathway is purine metabolism; IMP biosynthesis via de novo pathway; 5-formamido-1-(5-phospho-D-ribosyl)imidazole-4-carboxamide from 5-amino-1-(5-phospho-D-ribosyl)imidazole-4-carboxamide (10-formyl THF route): step 1/1. It functions in the pathway purine metabolism; IMP biosynthesis via de novo pathway; IMP from 5-formamido-1-(5-phospho-D-ribosyl)imidazole-4-carboxamide: step 1/1. The polypeptide is Bifunctional purine biosynthesis protein PurH (Ectopseudomonas mendocina (strain ymp) (Pseudomonas mendocina)).